We begin with the raw amino-acid sequence, 341 residues long: Anthranilate phosphoribosyltransferase (341 aa).

5-phospho-alpha-D-ribose 1-diphosphate is bound by residues glycine 82, 85–86, threonine 90, 92–95, 110–118, and serine 122; these read GD, NIST, and KHGGRSVSG. Anthranilate is bound at residue glycine 82. Position 94 (serine 94) interacts with Mg(2+). Arginine 168 contributes to the anthranilate binding site. Residues aspartate 227 and glutamate 228 each coordinate Mg(2+).

Belongs to the anthranilate phosphoribosyltransferase family. In terms of assembly, homodimer. Requires Mg(2+) as cofactor.

The catalysed reaction is N-(5-phospho-beta-D-ribosyl)anthranilate + diphosphate = 5-phospho-alpha-D-ribose 1-diphosphate + anthranilate. Its pathway is amino-acid biosynthesis; L-tryptophan biosynthesis; L-tryptophan from chorismate: step 2/5. Catalyzes the transfer of the phosphoribosyl group of 5-phosphorylribose-1-pyrophosphate (PRPP) to anthranilate to yield N-(5'-phosphoribosyl)-anthranilate (PRA). In Nitrosomonas europaea (strain ATCC 19718 / CIP 103999 / KCTC 2705 / NBRC 14298), this protein is Anthranilate phosphoribosyltransferase.